Here is a 693-residue protein sequence, read N- to C-terminus: Serine/threonine-protein kinase Pkn1 (693 aa).

A Protein kinase domain is found at 59-328; that stretch reads FRLVRRLGRG…QVALAEHVRV (270 aa). ATP is bound by residues 65 to 73 and lysine 88; that span reads LGRGGMGAV. Residue aspartate 180 is the Proton acceptor of the active site. The PilZ domain maps to 393–491; sequence LVEVPVQVVL…LKAAVDALLQ (99 aa). The TPR repeat unit spans residues 630-663; that stretch reads ARSHFQSGGALERDGQLSQALDQYERGLKLAPLE.

It belongs to the protein kinase superfamily. Ser/Thr protein kinase family. Autophosphorylated.

It catalyses the reaction L-seryl-[protein] + ATP = O-phospho-L-seryl-[protein] + ADP + H(+). The catalysed reaction is L-threonyl-[protein] + ATP = O-phospho-L-threonyl-[protein] + ADP + H(+). Its activity is regulated as follows. May be regulated by calcium or a calmodulin-like protein. Plays an essential role in proper timing of early development events. The sequence is that of Serine/threonine-protein kinase Pkn1 (pkn1) from Myxococcus xanthus.